The primary structure comprises 640 residues: Threonine--tRNA ligase (640 aa).

The region spanning 1–61 (MPVITLPDGS…SNDATLQIIT (61 aa)) is the TGS domain. The catalytic stretch occupies residues 242–533 (DHRKIGKQLD…LIEHYAGVFP (292 aa)). Positions 333, 384, and 510 each coordinate Zn(2+).

Belongs to the class-II aminoacyl-tRNA synthetase family. As to quaternary structure, homodimer. Zn(2+) serves as cofactor.

The protein resides in the cytoplasm. The enzyme catalyses tRNA(Thr) + L-threonine + ATP = L-threonyl-tRNA(Thr) + AMP + diphosphate + H(+). In terms of biological role, catalyzes the attachment of threonine to tRNA(Thr) in a two-step reaction: L-threonine is first activated by ATP to form Thr-AMP and then transferred to the acceptor end of tRNA(Thr). Also edits incorrectly charged L-seryl-tRNA(Thr). This chain is Threonine--tRNA ligase, found in Pseudomonas putida (strain GB-1).